The following is a 420-amino-acid chain: Annetocin receptor (420 aa).

The Extracellular portion of the chain corresponds to 1–54 (MEMDDDEAILLDDIYALASTPNQTIVTSSFPQTVSPGFLARRNEALAMVEVAVQ). A glycan (N-linked (GlcNAc...) asparagine) is linked at Asn22. A helical transmembrane segment spans residues 55–75 (STILILTVVGNAAVLAMIVSL). The Cytoplasmic portion of the chain corresponds to 76 to 83 (SRHKDLGR). Residues 84–104 (MYTMIGHLSCADLFVAIFNLL) traverse the membrane as a helical segment. At 105 to 124 (PQLLWDVTHRFRGGRVLCKL) the chain is on the extracellular side. A disulfide bond links Cys122 and Cys201. A helical membrane pass occupies residues 125 to 145 (VKYVQVVAMYASAYVLMSTAV). Residues 146–166 (DRYTAICHPMRSHTWTSTTAH) lie on the Cytoplasmic side of the membrane. The chain crosses the membrane as a helical span at residues 167-187 (YLVIGAWVLALVFAVPQLVIF). Over 188 to 212 (DYVEVVPGSGVYDCVDHFRPRWTLP) the chain is Extracellular. The helical transmembrane segment at 213 to 233 (VYITWFALAVYVIPLVVLATI) threads the bilayer. The Cytoplasmic portion of the chain corresponds to 234–328 (YLRICVVVWK…KTKTVKLTLT (95 aa)). Residues 329 to 349 (VVISYLVCWAPFFVSHIWSAW) form a helical membrane-spanning segment. Residues 350–360 (DPHAPFEGTEM) are Extracellular-facing. Residues 361–381 (VITLLLGSLNSCINPWIYLAF) form a helical membrane-spanning segment. Residues 382–420 (SDQLRRKVTQCCPRSWGQRPSTLSHDSTDFRSGSRPTHS) lie on the Cytoplasmic side of the membrane. Positions 397 to 420 (WGQRPSTLSHDSTDFRSGSRPTHS) are disordered. The span at 399 to 420 (QRPSTLSHDSTDFRSGSRPTHS) shows a compositional bias: polar residues.

This sequence belongs to the G-protein coupled receptor 1 family. Vasopressin/oxytocin receptor subfamily. As to expression, nephridia in clitellum region.

The protein localises to the cell membrane. In terms of biological role, receptor for annetocin. Activation by annetocin may induce egg-laying behavior through calcium-dependent signaling. The sequence is that of Annetocin receptor from Eisenia fetida (Red wiggler worm).